A 430-amino-acid polypeptide reads, in one-letter code: Adenylosuccinate synthetase (430 aa).

Residues 13–19 (GDEGKGK) and 41–43 (GHT) each bind GTP. The active-site Proton acceptor is the D14. Mg(2+) contacts are provided by D14 and G41. IMP contacts are provided by residues 14–17 (DEGK), 39–42 (NAGH), T130, R144, Q225, T240, and R304. H42 acts as the Proton donor in catalysis. 300-306 (ASTGRPR) is a binding site for substrate. Residues R306, 332–334 (KLD), and 414–416 (STG) contribute to the GTP site.

The protein belongs to the adenylosuccinate synthetase family. Homodimer. Requires Mg(2+) as cofactor.

The protein localises to the cytoplasm. It catalyses the reaction IMP + L-aspartate + GTP = N(6)-(1,2-dicarboxyethyl)-AMP + GDP + phosphate + 2 H(+). The protein operates within purine metabolism; AMP biosynthesis via de novo pathway; AMP from IMP: step 1/2. Plays an important role in the de novo pathway of purine nucleotide biosynthesis. Catalyzes the first committed step in the biosynthesis of AMP from IMP. The protein is Adenylosuccinate synthetase of Xylella fastidiosa (strain M12).